A 38-amino-acid chain; its full sequence is Potassium channel toxin alpha-KTx 2.3 (38 aa).

Intrachain disulfides connect Cys7–Cys29, Cys13–Cys34, and Cys17–Cys36.

This sequence belongs to the short scorpion toxin superfamily. Potassium channel inhibitor family. Alpha-KTx 02 subfamily. In terms of tissue distribution, expressed by the venom gland.

The protein localises to the secreted. In terms of biological role, inhibitor of voltage-gated potassium channels (Kv). It is capable of displacing the binding of radio-labeled noxiustoxin (AC P08815) to rat brain synaptosomes with high affinity (about 100 pM). It is also capable of inhibiting transient potassium-currents (resembling I(A)-type currents), in cultured rat cerebellar granule cells. About 50% of the peak currents are reduced by application of a 1.5 uM solution of this toxin. The protein is Potassium channel toxin alpha-KTx 2.3 of Centruroides limpidus (Mexican scorpion).